The following is a 224-amino-acid chain: Ribose-5-phosphate isomerase A (224 aa).

Residues 26–29, 81–84, and 94–97 each bind substrate; these read TGST, DGAD, and KGGG. Residue E103 is the Proton acceptor of the active site. K121 contributes to the substrate binding site.

This sequence belongs to the ribose 5-phosphate isomerase family. Homodimer.

The catalysed reaction is aldehydo-D-ribose 5-phosphate = D-ribulose 5-phosphate. It functions in the pathway carbohydrate degradation; pentose phosphate pathway; D-ribose 5-phosphate from D-ribulose 5-phosphate (non-oxidative stage): step 1/1. Functionally, catalyzes the reversible conversion of ribose-5-phosphate to ribulose 5-phosphate. This Listeria monocytogenes serovar 1/2a (strain ATCC BAA-679 / EGD-e) protein is Ribose-5-phosphate isomerase A.